Here is a 631-residue protein sequence, read N- to C-terminus: tRNA uridine 5-carboxymethylaminomethyl modification enzyme MnmG (631 aa).

Residues 13-18, valine 125, and serine 180 each bind FAD; that span reads GGGHAG. 273 to 287 provides a ligand contact to NAD(+); the sequence is GPRYCPSIEDKVMRF. Residue glutamine 370 participates in FAD binding.

The protein belongs to the MnmG family. In terms of assembly, homodimer. Heterotetramer of two MnmE and two MnmG subunits. FAD is required as a cofactor.

It localises to the cytoplasm. In terms of biological role, NAD-binding protein involved in the addition of a carboxymethylaminomethyl (cmnm) group at the wobble position (U34) of certain tRNAs, forming tRNA-cmnm(5)s(2)U34. The protein is tRNA uridine 5-carboxymethylaminomethyl modification enzyme MnmG of Vibrio parahaemolyticus serotype O3:K6 (strain RIMD 2210633).